Consider the following 38-residue polypeptide: Defensin-like peptide 3 (38 aa).

2 cysteine pairs are disulfide-bonded: cysteine 6–cysteine 36 and cysteine 13–cysteine 29.

Produced by the crural gland and detected in venom from the spur located on each male hind leg.

Its subcellular location is the secreted. Its function is as follows. Does not show antimicrobial, myotoxic, hemolytic and cell-promoting activities. This is Defensin-like peptide 3 from Ornithorhynchus anatinus (Duckbill platypus).